The chain runs to 81 residues: Acyl carrier protein 2 (81 aa).

The Carrier domain maps to Met1–Leu79. At Ser39 the chain carries O-(pantetheine 4'-phosphoryl)serine.

This sequence belongs to the acyl carrier protein (ACP) family. 4'-phosphopantetheine is transferred from CoA to a specific serine of apo-ACP by AcpS. This modification is essential for activity because fatty acids are bound in thioester linkage to the sulfhydryl of the prosthetic group.

It localises to the cytoplasm. The protein operates within lipid metabolism; fatty acid biosynthesis. Carrier of the growing fatty acid chain in fatty acid biosynthesis. This Ralstonia nicotianae (strain ATCC BAA-1114 / GMI1000) (Ralstonia solanacearum) protein is Acyl carrier protein 2.